We begin with the raw amino-acid sequence, 274 residues long: RsbT co-antagonist protein RsbRA (274 aa).

The region spanning 150–265 (SAPLIPVFEN…KGIQTALEMT (116 aa)) is the STAS domain. Residues threonine 171 and threonine 205 each carry the phosphothreonine modification.

As to quaternary structure, interacts with RsbRB and RsbS in the stressosome. The stressosome probably also contains RsbRC and RsbRD. In terms of processing, phosphorylated by RsbT. This threonine phosphorylation abrogates the ability of RsbRA to stimulate RsbT in vitro.

Functionally, acts as a positive regulator of sigma-B activity in response to salt and heat stress by stimulating the activity of the RsbT kinase toward RsbS in vitro. Its function is as follows. One of 4 functionally non-identical RsbR paralogs, it functions in the environmental signaling branch of the general stress response. Negative regulator of sigma-B activity. Non-phosphorylated RsbS binds to RsbT, preventing its association with RsbU. Requires any one of RsbRA, RsbRB, RsbRC or RsbRD to sequester RsbT. When RsbS and the RsbR paralog(s) are phosphorylated, they release RsbT, which can then bind and activate RsbU. This Bacillus subtilis (strain 168) protein is RsbT co-antagonist protein RsbRA (rsbRA).